A 621-amino-acid chain; its full sequence is Myosin-binding protein C, slow-type (621 aa).

Ig-like C2-type domains are found at residues 1–53, 54–142, and 144–241; these read EEIV…VDLR, PLKI…HVID, and PKII…LWIS. Residue threonine 28 is modified to Phosphothreonine. At serine 233 the chain carries Phosphoserine. 3 Fibronectin type-III domains span residues 244 to 343, 344 to 459, and 556 to 621; these read LRLA…TSPP, TLLA…IEPP, and PPQA…VIGN. Threonine 420 carries the post-translational modification Phosphothreonine. Phosphotyrosine is present on tyrosine 445. One can recognise an Ig-like C2-type 4 domain in the interval 459–553; sequence PKIRIPRHLK…ASIDIQIVDR (95 aa).

The protein belongs to the immunoglobulin superfamily. MyBP family. In terms of assembly, interacts with USP25 (isoform USP25m only); the interaction prevents proteasomal degradation of MYBPC1.

Functionally, thick filament-associated protein located in the crossbridge region of vertebrate striated muscle a bands. Slow skeletal protein that binds to both myosin and actin. In vitro, binds to native thin filaments and modifies the activity of actin-activated myosin ATPase. May modulate muscle contraction or may play a more structural role. This is Myosin-binding protein C, slow-type (Mybpc1) from Rattus norvegicus (Rat).